The chain runs to 83 residues: MGSLSPWHWAILAVVVIVLFGAKKLPDAARSLGKSLRIFKSEVRELQNENKAEASIETPTPVQSQRVDPSAASGQDSTEARPA.

A helical membrane pass occupies residues 1–21 (MGSLSPWHWAILAVVVIVLFG). The tract at residues 48–83 (NENKAEASIETPTPVQSQRVDPSAASGQDSTEARPA) is disordered. Residues 57 to 77 (ETPTPVQSQRVDPSAASGQDS) show a composition bias toward polar residues.

The protein belongs to the TatA/E family. The Tat system comprises two distinct complexes: a TatABC complex, containing multiple copies of TatA, TatB and TatC subunits, and a separate TatA complex, containing only TatA subunits. Substrates initially bind to the TatABC complex, which probably triggers association of the separate TatA complex to form the active translocon.

The protein resides in the cell membrane. Part of the twin-arginine translocation (Tat) system that transports large folded proteins containing a characteristic twin-arginine motif in their signal peptide across membranes. TatA could form the protein-conducting channel of the Tat system. The sequence is that of Sec-independent protein translocase protein TatA from Mycobacterium bovis (strain BCG / Pasteur 1173P2).